The sequence spans 272 residues: Putative phosphoenolpyruvate synthase regulatory protein (272 aa).

152–159 (GVSRCGKT) lines the ADP pocket.

Belongs to the pyruvate, phosphate/water dikinase regulatory protein family. PSRP subfamily.

It catalyses the reaction [pyruvate, water dikinase] + ADP = [pyruvate, water dikinase]-phosphate + AMP + H(+). It carries out the reaction [pyruvate, water dikinase]-phosphate + phosphate + H(+) = [pyruvate, water dikinase] + diphosphate. In terms of biological role, bifunctional serine/threonine kinase and phosphorylase involved in the regulation of the phosphoenolpyruvate synthase (PEPS) by catalyzing its phosphorylation/dephosphorylation. This Pseudomonas putida (strain ATCC 700007 / DSM 6899 / JCM 31910 / BCRC 17059 / LMG 24140 / F1) protein is Putative phosphoenolpyruvate synthase regulatory protein.